The sequence spans 280 residues: MKRMIIDGKEISNRIKEEVKREIQEFGYKPRLAILMAGDDESSKVYANSKVKACESVGIEAKVYYFSEKEEDKFFDTLEKLNEDKDTHGIMIEMPLPKGFDVDKVYDTINPYKDVDCISNYNMGRLFAGKPLFVPCTPKAIIHILENTGVDLEGKHAVVIGRSNILGKPVAKLLLDKNCTVTVCHSKTKDLAYHTKQADVLVVAAGKMNLVRGDMVKEGVVLIDAGINVHEGKIYGDADFESIKDKASYVTPVPGGVGPVTTAMILKNTLEAFKYAVKSL.

NADP(+)-binding positions include 161–163 (GRS), Ser186, and Ile227.

The protein belongs to the tetrahydrofolate dehydrogenase/cyclohydrolase family. As to quaternary structure, homodimer.

The enzyme catalyses (6R)-5,10-methylene-5,6,7,8-tetrahydrofolate + NADP(+) = (6R)-5,10-methenyltetrahydrofolate + NADPH. The catalysed reaction is (6R)-5,10-methenyltetrahydrofolate + H2O = (6R)-10-formyltetrahydrofolate + H(+). It participates in one-carbon metabolism; tetrahydrofolate interconversion. Functionally, catalyzes the oxidation of 5,10-methylenetetrahydrofolate to 5,10-methenyltetrahydrofolate and then the hydrolysis of 5,10-methenyltetrahydrofolate to 10-formyltetrahydrofolate. The chain is Bifunctional protein FolD from Caldanaerobacter subterraneus subsp. tengcongensis (strain DSM 15242 / JCM 11007 / NBRC 100824 / MB4) (Thermoanaerobacter tengcongensis).